A 152-amino-acid polypeptide reads, in one-letter code: Proteolipid protein 2 (152 aa).

Residues 19–137 (FSRTRKGILL…DAYFTFPLRQ (119 aa)) enclose the MARVEL domain. The next 3 helical transmembrane spans lie at 25–45 (GILLLAEIILCLVILICFSAG), 48–68 (GYSSLSVVEMVLAIVFFVIYM), and 85–105 (FFRTLIAAILYLITSIFVLVE). N-linked (GlcNAc...) asparagine glycosylation is present at Asn-108. A helical membrane pass occupies residues 112–132 (IAAGVLGLLATCLFGYDAYFT).

It localises to the membrane. May play a role in cell differentiation in the intestinal epithelium. The chain is Proteolipid protein 2 (PLP2) from Oryctolagus cuniculus (Rabbit).